The primary structure comprises 373 residues: MKSGRFIGVMSGTSLDGVDVVLAAIDETMVAQQASLTWPIPVHLKKGILDICQGQPLTLSQLGQLDTQLGRLFAQAVNALLARQRLQPRDIVAIGCHGQTVWHEPTGEAPHTLQIGDNNHIVAHTGITVVGDFRRRDIALGGQGAPLVPAFHHALLGHPTEKRMVLNIGGIANLSLLFPGQAVRGYDTGPGNMLMDAWIWRQCAQPYDKDAAWAKEGQVILPLLQKMLRDPYFAASAPKSTGREYFNYGWLERHLTAFPGADARDVQATLAELTAVSIAQQVLLNGGCERLMVCGGGSRNPLVMARLAALLPGIEVSTTDKAGISGDDMEALAFAWLAWRTLAGLPGNLPSVTGATEASVLGAIYPANPITQS.

An ATP-binding site is contributed by 12 to 19; it reads GTSLDGVD.

It belongs to the anhydro-N-acetylmuramic acid kinase family.

The enzyme catalyses 1,6-anhydro-N-acetyl-beta-muramate + ATP + H2O = N-acetyl-D-muramate 6-phosphate + ADP + H(+). The protein operates within amino-sugar metabolism; 1,6-anhydro-N-acetylmuramate degradation. It functions in the pathway cell wall biogenesis; peptidoglycan recycling. Functionally, catalyzes the specific phosphorylation of 1,6-anhydro-N-acetylmuramic acid (anhMurNAc) with the simultaneous cleavage of the 1,6-anhydro ring, generating MurNAc-6-P. Is required for the utilization of anhMurNAc either imported from the medium or derived from its own cell wall murein, and thus plays a role in cell wall recycling. This chain is Anhydro-N-acetylmuramic acid kinase, found in Salmonella newport (strain SL254).